Reading from the N-terminus, the 419-residue chain is Voltage-gated potassium channel subunit beta-1 (419 aa).

The tract at residues 1-51 (MLAARTGAAGSQIAEESSKLRKQAAFSGGSKDRSPKKASENVKDSSLSPSG) is disordered. Positions 30–43 (SKDRSPKKASENVK) are enriched in basic and acidic residues. Residues Thr108, Trp109, Gln115, and Asp137 each coordinate NADP(+). The active-site Proton donor/acceptor is Tyr142. NADP(+) is bound by residues Asn210, Ser240, Arg241, Gln266, Trp295, Ser296, Pro297, Leu298, Ala299, Cys300, Lys306, Arg316, Gly375, Ser377, Gln381, Glu384, and Asn385.

Belongs to the shaker potassium channel beta subunit family. As to quaternary structure, homotetramer. Interaction with tetrameric potassium channel alpha subunits gives rise to a heterooctamer. Identified in potassium channel complexes containing KCNA1, KCNA2, KCNA4, KCNA5, KCNA6, KCNAB1 and KCNAB2. Part of a complex containing KCNA1, KCNA4 and LGI1; interaction with LGI1 inhibits down-regulation of KCNA1 channel activity. Interacts with the dimer formed by GNB1 and GNG2; this enhances KCNA1 binding. Interacts with SQSTM1. In terms of tissue distribution, detected in portal vein myocytes (at protein level).

The protein localises to the cytoplasm. It is found in the membrane. The protein resides in the cell membrane. The catalysed reaction is a primary alcohol + NADP(+) = an aldehyde + NADPH + H(+). The enzyme catalyses a secondary alcohol + NADP(+) = a ketone + NADPH + H(+). Its function is as follows. Regulatory subunit of the voltage-gated potassium (Kv) channels composed of pore-forming and potassium-conducting alpha subunits and of regulatory beta subunits. The beta-1/KCNAB1 cytoplasmic subunit mediates closure of delayed rectifier potassium channels by physically obstructing the pore via its N-terminal domain and increases the speed of channel closure for other family members. Promotes the inactivation of KCNA1, KCNA2, KCNA4, KCNA5 and KCNA6 alpha subunit-containing channels. Displays nicotinamide adenine dinucleotide phosphate (NADPH)-dependent aldoketoreductase activity by catalyzing the NADPH-dependent reduction of a variety of endogenous aldehydes and ketones. The binding of NADPH is required for efficient down-regulation of potassium channel activity. Oxidation of the bound NADPH restrains N-terminal domain from blocking the channel, thereby decreasing N-type inactivation of potassium channel activity. The chain is Voltage-gated potassium channel subunit beta-1 (KCNAB1) from Oryctolagus cuniculus (Rabbit).